We begin with the raw amino-acid sequence, 410 residues long: 3-phosphoshikimate 1-carboxyvinyltransferase (410 aa).

Residues lysine 21, serine 22, and arginine 26 each coordinate 3-phosphoshikimate. Lysine 21 is a phosphoenolpyruvate binding site. Glycine 69 and arginine 97 together coordinate phosphoenolpyruvate. Residues serine 143, serine 144, glutamine 145, serine 171, aspartate 288, and lysine 315 each coordinate 3-phosphoshikimate. Glutamine 145 serves as a coordination point for phosphoenolpyruvate. Aspartate 288 functions as the Proton acceptor in the catalytic mechanism. Arginine 319, arginine 364, and lysine 389 together coordinate phosphoenolpyruvate.

It belongs to the EPSP synthase family. As to quaternary structure, monomer.

It localises to the cytoplasm. It carries out the reaction 3-phosphoshikimate + phosphoenolpyruvate = 5-O-(1-carboxyvinyl)-3-phosphoshikimate + phosphate. It functions in the pathway metabolic intermediate biosynthesis; chorismate biosynthesis; chorismate from D-erythrose 4-phosphate and phosphoenolpyruvate: step 6/7. In terms of biological role, catalyzes the transfer of the enolpyruvyl moiety of phosphoenolpyruvate (PEP) to the 5-hydroxyl of shikimate-3-phosphate (S3P) to produce enolpyruvyl shikimate-3-phosphate and inorganic phosphate. The sequence is that of 3-phosphoshikimate 1-carboxyvinyltransferase from Bacteroides fragilis (strain ATCC 25285 / DSM 2151 / CCUG 4856 / JCM 11019 / LMG 10263 / NCTC 9343 / Onslow / VPI 2553 / EN-2).